The chain runs to 532 residues: CTP synthase (532 aa).

The tract at residues 1-267 (MTKFIFVTGG…DDIVLKILGL (267 aa)) is amidoligase domain. Serine 13 contributes to the CTP binding site. Serine 13 is a binding site for UTP. Position 14-19 (14-19 (SLGKGI)) interacts with ATP. Residue tyrosine 54 coordinates L-glutamine. Aspartate 71 contributes to the ATP binding site. The Mg(2+) site is built by aspartate 71 and glutamate 141. Residues 148–150 (DIE), 188–193 (KTKPTQ), and lysine 224 contribute to the CTP site. Residues 188–193 (KTKPTQ) and lysine 224 each bind UTP. One can recognise a Glutamine amidotransferase type-1 domain in the interval 292–532 (EIAIVGKYVE…EFVKATLANR (241 aa)). Position 354 (glycine 354) interacts with L-glutamine. Cysteine 381 serves as the catalytic Nucleophile; for glutamine hydrolysis. Residues 382–385 (LGMQ), glutamate 405, and arginine 462 contribute to the L-glutamine site. Residues histidine 507 and glutamate 509 contribute to the active site.

It belongs to the CTP synthase family. In terms of assembly, homotetramer.

The enzyme catalyses UTP + L-glutamine + ATP + H2O = CTP + L-glutamate + ADP + phosphate + 2 H(+). It carries out the reaction L-glutamine + H2O = L-glutamate + NH4(+). It catalyses the reaction UTP + NH4(+) + ATP = CTP + ADP + phosphate + 2 H(+). It participates in pyrimidine metabolism; CTP biosynthesis via de novo pathway; CTP from UDP: step 2/2. Allosterically activated by GTP, when glutamine is the substrate; GTP has no effect on the reaction when ammonia is the substrate. The allosteric effector GTP functions by stabilizing the protein conformation that binds the tetrahedral intermediate(s) formed during glutamine hydrolysis. Inhibited by the product CTP, via allosteric rather than competitive inhibition. Catalyzes the ATP-dependent amination of UTP to CTP with either L-glutamine or ammonia as the source of nitrogen. Regulates intracellular CTP levels through interactions with the four ribonucleotide triphosphates. The chain is CTP synthase from Desulfitobacterium hafniense (strain Y51).